The sequence spans 359 residues: Lachesin (359 aa).

The N-terminal stretch at 1–25 (MWRPSISNCVWSTLLLAIFVQQTLA) is a signal peptide. The Ig-like V-type domain occupies 29 to 130 (PTISYITQEQ…HKVSAEVKLS (102 aa)). Cysteine 50 and cysteine 113 are disulfide-bonded. Residues asparagine 92 and asparagine 140 are each glycosylated (N-linked (GlcNAc...) asparagine). 2 consecutive Ig-like C2-type domains span residues 135–221 (PVIS…INVE) and 226–317 (PVIT…ARVN). 2 disulfide bridges follow: cysteine 157–cysteine 204 and cysteine 247–cysteine 303. Alanine 336 is lipidated: GPI-anchor amidated alanine. The propeptide at 337–359 (GAEDVSATSFALVGILAALLFAR) is removed in mature form.

In terms of tissue distribution, expressed on differentiating neuronal cells from the onset of neurogenesis in both the central and peripheral nervous systems. First detected in the cellularized blastoderm, apart from in the ventral side. Expression persists uniformly in the early ectoderm until the end of gastrulation. From stage 10, expressed in an alternating strong/weak pattern in each segment until stage 15 when it disappears. From stage 11, expressed in subsets of neurons and later subsets of glial cells. From early stage 13, strongly expressed in trachea, hindgut, foregut and the nervous system.

The protein localises to the cell membrane. In terms of biological role, required for normal tracheal development and maintenance of the trans-epithelial diffusion barrier. Functions as a homophilic cell-adhesion molecule. May play a role in early neuronal differentiation and axon outgrowth. The polypeptide is Lachesin (Lac) (Drosophila melanogaster (Fruit fly)).